Consider the following 127-residue polypeptide: Putative truncated L-serine dehydratase YIL168W (127 aa).

K39 bears the N6-(pyridoxal phosphate)lysine mark.

The protein belongs to the serine/threonine dehydratase family. Pyridoxal 5'-phosphate is required as a cofactor.

The protein resides in the cytoplasm. It catalyses the reaction L-serine = pyruvate + NH4(+). It participates in carbohydrate biosynthesis; gluconeogenesis. The sequence is that of Putative truncated L-serine dehydratase YIL168W from Saccharomyces cerevisiae (strain ATCC 204508 / S288c) (Baker's yeast).